A 597-amino-acid polypeptide reads, in one-letter code: Elongation factor 4 (597 aa).

Residues 4–181 enclose the tr-type G domain; the sequence is SKIRNFSIIA…AIVDYVPAPK (178 aa). GTP contacts are provided by residues 16-21 and 128-131; these read DHGKST and NKID.

It belongs to the TRAFAC class translation factor GTPase superfamily. Classic translation factor GTPase family. LepA subfamily.

The protein resides in the cell membrane. It carries out the reaction GTP + H2O = GDP + phosphate + H(+). In terms of biological role, required for accurate and efficient protein synthesis under certain stress conditions. May act as a fidelity factor of the translation reaction, by catalyzing a one-codon backward translocation of tRNAs on improperly translocated ribosomes. Back-translocation proceeds from a post-translocation (POST) complex to a pre-translocation (PRE) complex, thus giving elongation factor G a second chance to translocate the tRNAs correctly. Binds to ribosomes in a GTP-dependent manner. The chain is Elongation factor 4 from Mycoplasmopsis agalactiae (strain NCTC 10123 / CIP 59.7 / PG2) (Mycoplasma agalactiae).